A 355-amino-acid polypeptide reads, in one-letter code: Electron transfer flavoprotein subunit alpha, mitochondrial (355 aa).

295-323 (LYIAVGISGAIQHLAGMKDSKVIVAINKD) provides a ligand contact to FAD.

This sequence belongs to the ETF alpha-subunit/FixB family. As to quaternary structure, heterodimer of an alpha and a beta subunit. FAD serves as cofactor.

It is found in the mitochondrion matrix. Functionally, the electron transfer flavoprotein serves as a specific electron acceptor for several dehydrogenases, including five acyl-CoA dehydrogenases, glutaryl-CoA and sarcosine dehydrogenase. It transfers the electrons to the main mitochondrial respiratory chain via ETF-ubiquinone oxidoreductase (ETF dehydrogenase). The protein is Electron transfer flavoprotein subunit alpha, mitochondrial (etfa) of Dictyostelium discoideum (Social amoeba).